We begin with the raw amino-acid sequence, 628 residues long: Very-long-chain aldehyde decarbonylase GL1-2 (628 aa).

Transmembrane regions (helical) follow at residues 37–57 (GAAPVGSWWLHLLLLFAARGL), 131–151 (GWAIALLLHVLVAEPLFYWAH), 191–211 (VVIGVPLAGAFLMGVGSVGLV), 299–319 (DFVFLAHVVDIMASMHVPFVL), and 331–351 (FVLLPFWPVAFGFMLLMWCCS). Residues 137-277 (LLHVLVAEPL…MPIFDLLGGT (141 aa)) enclose the Fatty acid hydroxylase domain.

It belongs to the sterol desaturase family. As to quaternary structure, homodimer. Expressed in germinating seeds, radicals and leaves.

Its subcellular location is the endoplasmic reticulum membrane. The catalysed reaction is a long-chain fatty aldehyde + 2 NADPH + O2 + H(+) = a long-chain alkane + formate + 2 NADP(+) + H2O. Its function is as follows. Aldehyde decarbonylase involved in the conversion of aldehydes to alkanes. Core component of a very-long-chain alkane synthesis complex. Required for the formation of wax layers conferring cuticular permeability and drought tolerance. The chain is Very-long-chain aldehyde decarbonylase GL1-2 from Oryza sativa subsp. japonica (Rice).